Reading from the N-terminus, the 72-residue chain is DNA-directed RNA polymerase subunit Rpo10 (72 aa).

Residues cysteine 7, cysteine 10, cysteine 45, and cysteine 46 each contribute to the Zn(2+) site.

Belongs to the archaeal Rpo10/eukaryotic RPB10 RNA polymerase subunit family. In terms of assembly, part of the RNA polymerase complex. It depends on Zn(2+) as a cofactor.

Its subcellular location is the cytoplasm. The enzyme catalyses RNA(n) + a ribonucleoside 5'-triphosphate = RNA(n+1) + diphosphate. Functionally, DNA-dependent RNA polymerase (RNAP) catalyzes the transcription of DNA into RNA using the four ribonucleoside triphosphates as substrates. This is DNA-directed RNA polymerase subunit Rpo10 from Methanopyrus kandleri (strain AV19 / DSM 6324 / JCM 9639 / NBRC 100938).